We begin with the raw amino-acid sequence, 341 residues long: Biotin synthase (341 aa).

The region spanning Ala-40 to Arg-267 is the Radical SAM core domain. Residues Cys-55, Cys-59, and Cys-62 each contribute to the [4Fe-4S] cluster site. Cys-99, Cys-130, Cys-190, and Arg-262 together coordinate [2Fe-2S] cluster.

This sequence belongs to the radical SAM superfamily. Biotin synthase family. In terms of assembly, homodimer. [4Fe-4S] cluster is required as a cofactor. [2Fe-2S] cluster serves as cofactor.

It carries out the reaction (4R,5S)-dethiobiotin + (sulfur carrier)-SH + 2 reduced [2Fe-2S]-[ferredoxin] + 2 S-adenosyl-L-methionine = (sulfur carrier)-H + biotin + 2 5'-deoxyadenosine + 2 L-methionine + 2 oxidized [2Fe-2S]-[ferredoxin]. It functions in the pathway cofactor biosynthesis; biotin biosynthesis; biotin from 7,8-diaminononanoate: step 2/2. Functionally, catalyzes the conversion of dethiobiotin (DTB) to biotin by the insertion of a sulfur atom into dethiobiotin via a radical-based mechanism. The polypeptide is Biotin synthase (Xylella fastidiosa (strain 9a5c)).